The primary structure comprises 241 residues: Glutathione S-transferase omega-1 (241 aa).

An N-acetylserine modification is found at Ser2. Positions 22–101 (GLIRVYSMRF…YLDEAYPGKK (80 aa)) constitute a GST N-terminal domain. Cys32 functions as the Nucleophile in the catalytic mechanism. Residue Lys57 is modified to N6-acetyllysine. Residues Lys59, Val72, and 85–86 (ES) contribute to the glutathione site. Residues 106-225 (DPYEKACQKM…HIEPRDLRAF (120 aa)) form the GST C-terminal domain. N6-acetyllysine occurs at positions 143, 148, and 152.

Homodimer. In terms of tissue distribution, most abundant in the liver and skeletal muscle; also expressed in heart, diaphragm, colon, thymus, kidney, lung, ovaries, spleen, intestine and pancreas.

It localises to the cytoplasm. The protein resides in the cytosol. The catalysed reaction is RX + glutathione = an S-substituted glutathione + a halide anion + H(+). The enzyme catalyses L-dehydroascorbate + 2 glutathione = glutathione disulfide + L-ascorbate. It catalyses the reaction methylarsonate + 2 glutathione + H(+) = methylarsonous acid + glutathione disulfide + H2O. Its function is as follows. Exhibits glutathione-dependent thiol transferase and dehydroascorbate reductase activities. Has S-(phenacyl)glutathione reductase activity. Also has glutathione S-transferase activity. Participates in the biotransformation of inorganic arsenic and reduces monomethylarsonic acid (MMA) and dimethylarsonic acid. The protein is Glutathione S-transferase omega-1 (GSTO1) of Sus scrofa (Pig).